The chain runs to 207 residues: Outer-membrane lipoprotein LolB (207 aa).

The N-terminal stretch at 1–21 is a signal peptide; the sequence is MPMRKRHFYRLLPLASLLLAA. Cys22 carries the N-palmitoyl cysteine lipid modification. Residue Cys22 is the site of S-diacylglycerol cysteine attachment.

The protein belongs to the LolB family. Monomer.

It localises to the cell outer membrane. Functionally, plays a critical role in the incorporation of lipoproteins in the outer membrane after they are released by the LolA protein. The sequence is that of Outer-membrane lipoprotein LolB from Yersinia pseudotuberculosis serotype O:1b (strain IP 31758).